The primary structure comprises 250 residues: Solute carrier family 66 member 2 (250 aa).

The PQ-loop 1 domain occupies 14–80; the sequence is RMLVSWGASC…HHFESPLLWQ (67 aa). 6 helical membrane passes run 15–35, 49–69, 72–92, 118–138, 151–173, and 212–232; these read MLVS…PYIP, FSIY…LFWF, HFES…LLML, FFWH…FTGV, LFVE…PQLY, and FSIC…QVYL. The region spanning 149–215 is the PQ-loop 2 domain; the sequence is SPLFVEILGF…NQAPFQFSIC (67 aa).

Its subcellular location is the membrane. The chain is Solute carrier family 66 member 2 (slc66a2) from Xenopus laevis (African clawed frog).